We begin with the raw amino-acid sequence, 600 residues long: Elongation factor 4 (600 aa).

Residues 4-186 enclose the tr-type G domain; it reads DTIRNFSIIA…EIVKKIPPPE (183 aa). Residues 16–21 and 133–136 contribute to the GTP site; these read DHGKST and NKID.

Belongs to the TRAFAC class translation factor GTPase superfamily. Classic translation factor GTPase family. LepA subfamily.

The protein localises to the cell inner membrane. The enzyme catalyses GTP + H2O = GDP + phosphate + H(+). Required for accurate and efficient protein synthesis under certain stress conditions. May act as a fidelity factor of the translation reaction, by catalyzing a one-codon backward translocation of tRNAs on improperly translocated ribosomes. Back-translocation proceeds from a post-translocation (POST) complex to a pre-translocation (PRE) complex, thus giving elongation factor G a second chance to translocate the tRNAs correctly. Binds to ribosomes in a GTP-dependent manner. The polypeptide is Elongation factor 4 (Geobacter sulfurreducens (strain ATCC 51573 / DSM 12127 / PCA)).